A 440-amino-acid polypeptide reads, in one-letter code: Ribosomal protein uS12 methylthiotransferase RimO (440 aa).

In terms of domain architecture, MTTase N-terminal spans 8–118; it reads PTVGFVSLGC…VMGIVHTHLP (111 aa). Residues Cys17, Cys53, Cys82, Cys149, Cys153, and Cys156 each contribute to the [4Fe-4S] cluster site. Positions 135 to 372 constitute a Radical SAM core domain; sequence LTPDHFAYLK…MQVQEDISAD (238 aa). The TRAM domain occupies 375 to 440; that stretch reads AAKIDTVIQV…DHHDLYAQVV (66 aa).

It belongs to the methylthiotransferase family. RimO subfamily. Requires [4Fe-4S] cluster as cofactor.

It localises to the cytoplasm. It catalyses the reaction L-aspartate(89)-[ribosomal protein uS12]-hydrogen + (sulfur carrier)-SH + AH2 + 2 S-adenosyl-L-methionine = 3-methylsulfanyl-L-aspartate(89)-[ribosomal protein uS12]-hydrogen + (sulfur carrier)-H + 5'-deoxyadenosine + L-methionine + A + S-adenosyl-L-homocysteine + 2 H(+). Its function is as follows. Catalyzes the methylthiolation of an aspartic acid residue of ribosomal protein uS12. This Dechloromonas aromatica (strain RCB) protein is Ribosomal protein uS12 methylthiotransferase RimO.